A 316-amino-acid polypeptide reads, in one-letter code: Olfactory receptor 8J1 (316 aa).

Topologically, residues 1–25 (MAPENFTRVTEFILTGVSSCPELQI) are extracellular. N-linked (GlcNAc...) asparagine glycosylation occurs at Asn-5. Residues 26–46 (PLFLVFLVLYGLTMAGNLGII) form a helical membrane-spanning segment. The Cytoplasmic segment spans residues 47–54 (TLTSVDSR). The chain crosses the membrane as a helical span at residues 55–75 (LQTPMYFFLQHLALINLGNST). At 76-99 (VIAPKMLINFLVKKKTTSFYECAT) the chain is on the extracellular side. Cysteines 97 and 189 form a disulfide. A helical transmembrane segment spans residues 100–120 (QLGGFLFFIVSEVIMLALMAY). Over 121–139 (DRYVAICNPLLYMVVVSRR) the chain is Cytoplasmic. A helical transmembrane segment spans residues 140–160 (LCLLLVSLTYLYGFSTAIVVS). Over 161-197 (SYVFSVSYCSSNIINHFYCDNVPLLALSCSDTYLPET) the chain is Extracellular. A helical membrane pass occupies residues 198–217 (VVFISAATNVVGSLIIVLVS). Residues 218-237 (YFNIVLSILKICSSEGRKKA) are Cytoplasmic-facing. The chain crosses the membrane as a helical span at residues 238-258 (FSTCASHMMAVTIFYGTLLFM). At 259–272 (YVQPRSNHSLDTDD) the chain is on the extracellular side. Residues 273–293 (KMASVFYTLVIPMLNPLIYSL) traverse the membrane as a helical segment. At 294–316 (RNKDVKTALQRFMTNLCYSFKTM) the chain is on the cytoplasmic side.

Belongs to the G-protein coupled receptor 1 family.

It is found in the cell membrane. Functionally, odorant receptor. The sequence is that of Olfactory receptor 8J1 (OR8J1) from Homo sapiens (Human).